Consider the following 272-residue polypeptide: Tropinone reductase-like 1 (272 aa).

An NAD(+)-binding site is contributed by 17–41 (IITGGASGIGACTAELFHENGAKVV). A substrate-binding site is contributed by Ser-150. Tyr-163 acts as the Proton acceptor in catalysis.

It belongs to the short-chain dehydrogenases/reductases (SDR) family.

In terms of biological role, has no tropinone reductase activity. The chain is Tropinone reductase-like 1 from Erythroxylum coca (Coca plant).